Reading from the N-terminus, the 513-residue chain is Putative ribose/galactose/methyl galactoside import ATP-binding protein 3 (513 aa).

ABC transporter domains are found at residues 15–252 and 263–508; these read IELT…VGRQ and TSAN…TQRE. 47–54 lines the ATP pocket; that stretch reads GENGAGKS.

The protein belongs to the ABC transporter superfamily. Carbohydrate importer 2 (CUT2) (TC 3.A.1.2) family.

It is found in the cell inner membrane. The catalysed reaction is D-ribose(out) + ATP + H2O = D-ribose(in) + ADP + phosphate + H(+). It catalyses the reaction D-galactose(out) + ATP + H2O = D-galactose(in) + ADP + phosphate + H(+). Its function is as follows. Part of an ABC transporter complex involved in carbohydrate import. Could be involved in ribose, galactose and/or methyl galactoside import. Responsible for energy coupling to the transport system. This is Putative ribose/galactose/methyl galactoside import ATP-binding protein 3 from Burkholderia ambifaria (strain ATCC BAA-244 / DSM 16087 / CCUG 44356 / LMG 19182 / AMMD) (Burkholderia cepacia (strain AMMD)).